A 190-amino-acid polypeptide reads, in one-letter code: Riboflavin transporter FmnP (190 aa).

Residues 1–5 (MKVKK) lie on the Extracellular side of the membrane. A helical membrane pass occupies residues 6 to 26 (LVVVSMLSSIAFVLMLLNFPF). Residues 27-39 (PGLPDYLKIDFSD) are Cytoplasmic-facing. Residues 40-60 (VPAIIAILIYGPLAGIAVEAI) form a helical membrane-spanning segment. Residues 61–76 (KNVLQYIIQGSMAGVP) are Extracellular-facing. A helical membrane pass occupies residues 77 to 97 (VGQVANFIAGTLFILPTAFLF). The Cytoplasmic portion of the chain corresponds to 98–109 (KKLNSAKGLAVS). A helical transmembrane segment spans residues 110-130 (LLLGTAAMTILMSILNYVLIL). Topologically, residues 131–154 (PAYTWFLHSPALSDSALKTAVVAG) are extracellular. A helical transmembrane segment spans residues 155–175 (ILPFNMIKGIVITVVFSLIFI). At 176-190 (KLKPWIEQQRSAHIH) the chain is on the cytoplasmic side.

It belongs to the prokaryotic riboflavin transporter (P-RFT) (TC 2.A.87) family. Forms a stable energy-coupling factor (ECF) transporter complex composed of a membrane-embedded substrate-binding protein (S component), 2 ATP-binding proteins (A component) and 2 transmembrane proteins (T component). May be able to interact with more than 1 S component at a time.

It is found in the cell membrane. Its activity is regulated as follows. Inhibited by excess of riboflavin or FMN. Also inhibited by protonophores such as CCCP and FCCP or in the absence of glucose. Functionally, mediates uptake of riboflavin and roseoflavin, a toxic riboflavin analog; may also transport FMN. Probably a riboflavin-binding protein that interacts with the energy-coupling factor (ECF) ABC-transporter complex. Unlike classic ABC transporters this ECF transporter provides the energy necessary to transport a number of different substrates. The substrates themselves are bound by transmembrane, not extracytoplasmic soluble proteins. The chain is Riboflavin transporter FmnP (fmnP) from Bacillus subtilis (strain 168).